The sequence spans 53 residues: Abaecin (53 aa).

The signal sequence occupies residues Met1 to Ala19.

The protein localises to the secreted. This peptide has bactericidal activity. The chain is Abaecin from Apis mellifera (Honeybee).